Reading from the N-terminus, the 161-residue chain is MKRKVLAMLVPALLVAGAANAAEVYNKDGNKLDLYGKVVGLHYFSDDSGSDGDMSYARIGFKGETQIADQFTGYGQWEFNIGANGPESDKGNTATRLAFAGLGFGQNGTFDYGRNYGVVYDVEAWTDMLPEFGGDTYAGADNFMNGRANGVATYRNNGFFG.

The first 21 residues, 1 to 21 (MKRKVLAMLVPALLVAGAANA), serve as a signal peptide directing secretion.

The protein belongs to the Gram-negative porin family.

The protein localises to the cell outer membrane. The protein is Putative outer membrane protein YedS (yedS) of Escherichia coli (strain K12).